Consider the following 603-residue polypeptide: DNA mismatch repair protein MutL (603 aa).

The protein belongs to the DNA mismatch repair MutL/HexB family.

In terms of biological role, this protein is involved in the repair of mismatches in DNA. It is required for dam-dependent methyl-directed DNA mismatch repair. May act as a 'molecular matchmaker', a protein that promotes the formation of a stable complex between two or more DNA-binding proteins in an ATP-dependent manner without itself being part of a final effector complex. This chain is DNA mismatch repair protein MutL, found in Bradyrhizobium diazoefficiens (strain JCM 10833 / BCRC 13528 / IAM 13628 / NBRC 14792 / USDA 110).